The sequence spans 137 residues: Small ribosomal subunit protein bS6 (137 aa).

This sequence belongs to the bacterial ribosomal protein bS6 family.

In terms of biological role, binds together with bS18 to 16S ribosomal RNA. The protein is Small ribosomal subunit protein bS6 of Mycoplasma mycoides subsp. mycoides SC (strain CCUG 32753 / NCTC 10114 / PG1).